Consider the following 758-residue polypeptide: UPF0313 protein CV_1738 (758 aa).

In terms of domain architecture, Radical SAM core spans 377–642 (AWEMIKYSVN…VDVVRDGYRR (266 aa)). [4Fe-4S] cluster is bound by residues Cys391, Cys395, and Cys398. The tract at residues 698–758 (GAPMNRGKSP…KPGGKTSRSR (61 aa)) is disordered. The segment covering 727-737 (RGQGGQGGRPG) has biased composition (gly residues).

Belongs to the UPF0313 family. [4Fe-4S] cluster is required as a cofactor.

The sequence is that of UPF0313 protein CV_1738 from Chromobacterium violaceum (strain ATCC 12472 / DSM 30191 / JCM 1249 / CCUG 213 / NBRC 12614 / NCIMB 9131 / NCTC 9757 / MK).